Reading from the N-terminus, the 549-residue chain is Probable protein kinase UbiB (549 aa).

A Protein kinase domain is found at 123–501 (DFNDTPLASA…QQKSHKSNYL (379 aa)). ATP-binding positions include 129–137 (LASASISQV) and K152. D287 (proton acceptor) is an active-site residue. 2 helical membrane-spanning segments follow: residues 498–518 (SNYL…LFTQ) and 519–539 (IVTL…WAIG).

The protein belongs to the ABC1 family. UbiB subfamily.

The protein resides in the cell inner membrane. It functions in the pathway cofactor biosynthesis; ubiquinone biosynthesis [regulation]. Is probably a protein kinase regulator of UbiI activity which is involved in aerobic coenzyme Q (ubiquinone) biosynthesis. This chain is Probable protein kinase UbiB, found in Shewanella frigidimarina (strain NCIMB 400).